Consider the following 438-residue polypeptide: Neutral metalloprotease ShpI (438 aa).

An N-terminal signal peptide occupies residues 1–26 (MINKKKLVTSLVTSSLLATFTLGSFA). Positions 27-101 (DAHTYIINNE…KSENALSNSK (75 aa)) are excised as a propeptide. A Zn(2+)-binding site is contributed by His-242. The active site involves Glu-243. Zn(2+) contacts are provided by His-246 and Glu-269.

Belongs to the peptidase M30 family. Zn(2+) serves as cofactor. Several different N-terminal ends may be produced, the favored N-terminus is position 102.

The protein resides in the secreted. Its activity is regulated as follows. Inhibited by metal- and zinc-specific inhibitors, such as EDTA and 1,10-phenanthroline in vitro. Is resistant to all inhibitors of serine, cysteine and aspartic proteases. Its function is as follows. Protease that has a low substrate specificity. Catalyzes the hydrolysis of glucagon, melittin and oxidized beta-insulin at various positions in vitro. Is not able to cleave elastin or the synthetic substrates FAGLA (a substrate for neutral proteinases) and FALGPA (a substrate for collagenase). The chain is Neutral metalloprotease ShpI from Staphylococcus hyicus.